Reading from the N-terminus, the 152-residue chain is Deoxyuridine 5'-triphosphate nucleotidohydrolase (152 aa).

Substrate-binding positions include 63-65, asparagine 76, and 80-82; these read RSG and TID. Residues 129 to 152 are disordered; it reads LDDTERGQGGYGSTGVSAMPPVDG.

This sequence belongs to the dUTPase family. Mg(2+) serves as cofactor.

It carries out the reaction dUTP + H2O = dUMP + diphosphate + H(+). The protein operates within pyrimidine metabolism; dUMP biosynthesis; dUMP from dCTP (dUTP route): step 2/2. Its function is as follows. This enzyme is involved in nucleotide metabolism: it produces dUMP, the immediate precursor of thymidine nucleotides and it decreases the intracellular concentration of dUTP so that uracil cannot be incorporated into DNA. The chain is Deoxyuridine 5'-triphosphate nucleotidohydrolase from Cutibacterium acnes (strain DSM 16379 / KPA171202) (Propionibacterium acnes).